Consider the following 557-residue polypeptide: Dihydroxy-acid dehydratase (557 aa).

Cys47 lines the [2Fe-2S] cluster pocket. Asp79 serves as a coordination point for Mg(2+). A [2Fe-2S] cluster-binding site is contributed by Cys120. Residues Asp121 and Lys122 each contribute to the Mg(2+) site. Lys122 is modified (N6-carboxylysine). Cys192 is a binding site for [2Fe-2S] cluster. Glu444 contributes to the Mg(2+) binding site. The active-site Proton acceptor is the Ser470.

It belongs to the IlvD/Edd family. Homodimer. [2Fe-2S] cluster serves as cofactor. Requires Mg(2+) as cofactor.

It catalyses the reaction (2R)-2,3-dihydroxy-3-methylbutanoate = 3-methyl-2-oxobutanoate + H2O. The catalysed reaction is (2R,3R)-2,3-dihydroxy-3-methylpentanoate = (S)-3-methyl-2-oxopentanoate + H2O. It functions in the pathway amino-acid biosynthesis; L-isoleucine biosynthesis; L-isoleucine from 2-oxobutanoate: step 3/4. The protein operates within amino-acid biosynthesis; L-valine biosynthesis; L-valine from pyruvate: step 3/4. Functionally, functions in the biosynthesis of branched-chain amino acids. Catalyzes the dehydration of (2R,3R)-2,3-dihydroxy-3-methylpentanoate (2,3-dihydroxy-3-methylvalerate) into 2-oxo-3-methylpentanoate (2-oxo-3-methylvalerate) and of (2R)-2,3-dihydroxy-3-methylbutanoate (2,3-dihydroxyisovalerate) into 2-oxo-3-methylbutanoate (2-oxoisovalerate), the penultimate precursor to L-isoleucine and L-valine, respectively. The protein is Dihydroxy-acid dehydratase of Parasynechococcus marenigrum (strain WH8102).